A 182-amino-acid chain; its full sequence is Peptidyl-tRNA hydrolase (182 aa).

Position 14 (Tyr14) interacts with tRNA. His19 (proton acceptor) is an active-site residue. 3 residues coordinate tRNA: Phe64, Asn66, and Asn112.

It belongs to the PTH family. In terms of assembly, monomer.

It localises to the cytoplasm. It catalyses the reaction an N-acyl-L-alpha-aminoacyl-tRNA + H2O = an N-acyl-L-amino acid + a tRNA + H(+). Hydrolyzes ribosome-free peptidyl-tRNAs (with 1 or more amino acids incorporated), which drop off the ribosome during protein synthesis, or as a result of ribosome stalling. In terms of biological role, catalyzes the release of premature peptidyl moieties from peptidyl-tRNA molecules trapped in stalled 50S ribosomal subunits, and thus maintains levels of free tRNAs and 50S ribosomes. This chain is Peptidyl-tRNA hydrolase, found in Wolbachia sp. subsp. Drosophila simulans (strain wRi).